The following is a 190-amino-acid chain: 6,7-dimethyl-8-ribityllumazine synthase (190 aa).

Residues F23, 61 to 63 (SFE), and 85 to 87 (AVI) each bind 5-amino-6-(D-ribitylamino)uracil. 90 to 91 (QT) contacts (2S)-2-hydroxy-3-oxobutyl phosphate. The active-site Proton donor is H93. F118 provides a ligand contact to 5-amino-6-(D-ribitylamino)uracil. R132 provides a ligand contact to (2S)-2-hydroxy-3-oxobutyl phosphate.

The protein belongs to the DMRL synthase family.

It catalyses the reaction (2S)-2-hydroxy-3-oxobutyl phosphate + 5-amino-6-(D-ribitylamino)uracil = 6,7-dimethyl-8-(1-D-ribityl)lumazine + phosphate + 2 H2O + H(+). The protein operates within cofactor biosynthesis; riboflavin biosynthesis; riboflavin from 2-hydroxy-3-oxobutyl phosphate and 5-amino-6-(D-ribitylamino)uracil: step 1/2. Functionally, catalyzes the formation of 6,7-dimethyl-8-ribityllumazine by condensation of 5-amino-6-(D-ribitylamino)uracil with 3,4-dihydroxy-2-butanone 4-phosphate. This is the penultimate step in the biosynthesis of riboflavin. The protein is 6,7-dimethyl-8-ribityllumazine synthase of Trichormus variabilis (strain ATCC 29413 / PCC 7937) (Anabaena variabilis).